The chain runs to 468 residues: MSMGIRLDEKFQDRRKDGIEDAFMRQAVSSAQNRLRDGRLNAAGELGDWEAFRDHSEEIRQHVLEHLDYYLYQLSENVSKRGGSVFFAETPEEANRYIREVIRSKQAKHVVKSKSMVTEEIGLNEALQEEGCTVVESDLGEWILQLDEDPPSHIVAPALHKDRNAVHETFTAHGYTGSNDPTELGRYARQELRKDFLKAEVGITGCNFAIAESGAVGLVTNEGNGRMVTSLPDTVISVMGMERVVPSYEEFEVLVNMLCRSAVGQRLTSYITTFAGTRAVGEVDGPEEFHLVIVDNKRSNILGTQFQSVLQCIRCAACINVCPVYRHIGGHAYGSIYPGPIGAVLAPLLDGYENYKELPYASSLCGACTEACPVKIPLHELLIEHRRVIVEEKKQSPFVERIAMKGFAVTASSPFLFEAAEHVAPFATSPFATSGQIEKGLPAWTDSKDLPQPNKQTVRDWFKKRGNA.

4Fe-4S ferredoxin-type domains follow at residues 303 to 333 (GTQF…GHAY) and 352 to 381 (YENY…LHEL). Residues Cys-312, Cys-315, Cys-318, Cys-322, Cys-365, Cys-368, and Cys-372 each coordinate [4Fe-4S] cluster. Residues 442–468 (PAWTDSKDLPQPNKQTVRDWFKKRGNA) are disordered. Residues 457 to 468 (TVRDWFKKRGNA) are compositionally biased toward basic and acidic residues.

It belongs to the LutB/YkgF family.

Is involved in L-lactate degradation and allows cells to grow with lactate as the sole carbon source. Has probably a role as an electron transporter during oxidation of L-lactate. The chain is Lactate utilization protein B from Exiguobacterium sp. (strain ATCC BAA-1283 / AT1b).